We begin with the raw amino-acid sequence, 115 residues long: Large ribosomal subunit protein bL19 (115 aa).

The protein belongs to the bacterial ribosomal protein bL19 family.

In terms of biological role, this protein is located at the 30S-50S ribosomal subunit interface and may play a role in the structure and function of the aminoacyl-tRNA binding site. The protein is Large ribosomal subunit protein bL19 of Clostridium tetani (strain Massachusetts / E88).